The primary structure comprises 2595 residues: MASQFHQLRILVWKNWLGVKRQPLWTLVLILWPVIIFIILAITRTKFPPTAKPTCYLAPRNLPSAGFFPFLQTLLCDTDSKCKDTPYGPRDLLRRKGIDGPLFKESEILKKPSNPKRDSNLSLRSTQVPERSHTSLATVPPRPSYDLEGTGTENFNGSQLLTRILGLEKLLKQNSTPEDIRRELCESYPGYTADYAFSWVTLGKNVFNKFCLSNMTLLESSLQELKYQVSQMSSDPDNQKRVFRGLVQVLSFFSQVQQQREVWQLLSSLPDVFQNGTSLSSLFGVLQKANRVLLVVQKVYPRVQTDEGFSTLQKSVKHLLNTLDSPMQGDNSTHAWSDDDEQTLSPSSLAAQLLILENFEDAILNISSNSPYSPYLACVRNMTDNLAKGSPDNLKLLQSTIHFRKSFLQNGSSEDSFPPFLEILKSKLSQLRNLTELLCESETFSSIKKSCQFSNMSFERLCEDHAFHVQLIEAAELGTDLTTGLLYHDNIISAKLRGLLTGDPSKINLNVDWLLEQALQMNYLENITRLIPTVEAMLHVNTSADASEKPGQLREMFKNIDLLKEDLRAIGMSNTSIDKLLAIPIPDNRAEIISRVFWLHSCDTNVTNPKLEDAMKEFCKLPLPERSHQSYLIGLTLLHYLDIYNFTYKVFFPRKDQKPMERMMELFIKLREILNQLASGTHPLLDKMRSLRQMHLPRSVPLTQAMYRNTRMNSPAGSFSTISQALCSQGITTEYLTAMLPSSQKPKGNHTKDFLTYKLTKEEIASKYGIPLNATPFCFSLYKDIINMPAGPVIWAFLKPMLLGKILYSPYNPTTKAIMEKSNVTLRQLAELREKSQEWMDKSPIFMNSFHLLNQTIPMLQNTLRNPFVQVFVKFSVGLDAVELLKQIDDLDVLRLKLVNNIDIIDQLNTLSSLTVNISSCVLYDRIQASDTVEEMETVAEQLYKSNELFGSVIFKLPSNGSLHRGFDPEKVSLPPIVRYTIRMSLKTAQTTRSIRTKIWAPGPHNSPSHNQIYGRAFIYLQDSIERAIIELQTGRNSQEVAVQVQAVPYPCFMKDNFLTSVSYSLPIVLMVAWVVFIAAFVKKLVYEKDLRLHEYMKMMGVNSCSHFFAWLIESIGFLLVTIAILIVILKFGNILPKTNGFILFLYFSDYSFSVIAMSYLISVFFNNTNIAALIGSLIYVIAFFPFIVLVTVEDELSYVIKVFMSLLSPTAFSYASQYIARYEEQGVGLQWENMYKSPVQDDTTSFGWLCCLILADSFIYFFIAWYVRNVFPGTYGMAAPWYFPILPSYWKERFGCAEVKHEKSNGLMFTNIMMQNTNPSASKTSPDCAFPSNIEPEPKDLQVGVALHGVTKIYGSKTAVENLNLNFYEGHITSLLGPNGAGKTTTISMLTGLFGATAGTIFVYGKDIKTDLNTVRKNMGVCMQHDVLFSYLTTKEHLLLYGSIKVPHWTKTQLHEEVKRTLKDTGLYSHRHKRVGTLSGGMKRKLSISIALIGGSRVVILDEPSTGVDPCSRRSIWDVISKNKTARTIILSTHHLDEAEVLSDRIAFLEQGGLRCCGSPFYLKEAFGDGYHLTLTKKKSPNLDTNAICDTVAVTAMIQSHLPEAYLKEDIGGELVYVLPPFSTKVSGAYLSLLRALDKGMGKLNIGCYGISDTTVEEVFLNLTKDSQKSSNMSLEHLTQRKVGNPSANGTSTPDDLSVSSSNFTDRDDKVLTRSEKLEGFGLLLKKIMAILIKRFHHTRRNWKGLIAQVILPIVFVATAMGLGTLRDSSNSYPEIMISPSIYGTSEQTAFYANFDPSTSGLVSALWNFPGIDNVCLNTSDLQCLKKDDLGKWNTSGEAIDNFGVCSCSDNVQECPKFNYHPPHRRTYSSQVIYNLTGKHMENYLITTANHFVQKRYGGWSFGMKLTNDLRFDVTAVPDNRTLAKVWYDPEGYHSLPAYLNSLNNFLLRVNMSEYDAARHGIIMYSHPYPGVQDQEQATISSLIDILVALSILMGYSVTTASFVTYIVREHQTKAKQLQHISGIGVTCYWVTNFIYDMVFYLVPVAFSIGVIAIFKLPAFYSGNNLGAVSLLLLLFGYATFSWMYLLAGLFHETGMAFITYVCVNLFFGINSIVSLSVVYFLSKEKPNDPTLELISETLKRIFLIFPQFCFGYGLIELSQQQAVLDFLKAYGVEYPSETFEMDKLGAMFVALVSQGTMFFLLRLLINEWLIKKLRLFFRKFTSSPIMETVDEDEDVRAERFRVESGAAEFDLVQLHRLTKTYQLIHKKIIAVNNISLGIPAGECFGLLGVNGAGKTTIFKMLTGDIIPSSGNILIRNKSGSLGHVDSHSSLVGYCPQEDALDDLVTVEEHLYFYARVHGIPEKDIKDTVHKLLRRLHLMAYKDRSTSMCSYGTKRKLSTALALIGKPSILLLDEPSSGMDPKSKRHLWRIISEEVQNKCSVILTSHSMEECEALCTRLAIMVNGRFQCIGSLQHIKSRFGRGFTVKVHLKNNKVSMETLTKFMQLHFPKTYLKDQHLSMLEYHVPVTAGGVANIFDLLETNKTALNITNFLVSQTTLEEVFINFAKDQKSYENVDTSSQGSTISVDSQEDQLDS.

Residues 23 to 43 (PLWTLVLILWPVIIFIILAIT) form a helical membrane-spanning segment. Residues 109–119 (LKKPSNPKRDS) show a composition bias toward basic and acidic residues. The interval 109-143 (LKKPSNPKRDSNLSLRSTQVPERSHTSLATVPPRP) is disordered. Residues Asn-120, Asn-156, Asn-174, Asn-214, Asn-275, Asn-331, Asn-365, Asn-381, Asn-410, Asn-433, Asn-455, Asn-526, Asn-541, Asn-574, Asn-605, Asn-645, Asn-749, Asn-773, Asn-812, Asn-823, Asn-854, Asn-917, and Asn-960 are each glycosylated (N-linked (GlcNAc...) asparagine). The span at 120-137 (NLSLRSTQVPERSHTSLA) shows a compositional bias: polar residues. A run of 3 helical transmembrane segments spans residues 1062 to 1082 (VSYS…AAFV), 1109 to 1129 (FAWL…LIVI), and 1142 to 1162 (FILF…SYLI). Asn-1167 carries an N-linked (GlcNAc...) asparagine glycan. 3 helical membrane passes run 1171–1191 (IAAL…IVLV), 1197–1217 (LSYV…SYAS), and 1247–1267 (FGWL…IAWY). Asn-1319 is a glycosylation site (N-linked (GlcNAc...) asparagine). An ABC transporter 1 domain is found at 1346 to 1577 (VALHGVTKIY…FGDGYHLTLT (232 aa)). 1378 to 1385 (GPNGAGKT) serves as a coordination point for ATP. N-linked (GlcNAc...) asparagine glycosylation is found at Asn-1524, Asn-1663, Asn-1673, Asn-1686, Asn-1690, and Asn-1704. The interval 1672–1703 (SNMSLEHLTQRKVGNPSANGTSTPDDLSVSSS) is disordered. The segment covering 1687–1703 (PSANGTSTPDDLSVSSS) has biased composition (polar residues). The helical transmembrane segment at 1747 to 1767 (LIAQVILPIVFVATAMGLGTL) threads the bilayer. Asn-1819, Asn-1835, Asn-1876, Asn-1921, and Asn-1952 each carry an N-linked (GlcNAc...) asparagine glycan. The next 7 helical transmembrane spans lie at 1979 to 1999 (ATIS…GYSV), 2035 to 2055 (FIYD…VIAI), 2072 to 2092 (LLLL…AGLF), 2103 to 2123 (VCVN…VYFL), 2143 to 2163 (IFLI…SQQQ), 2187 to 2207 (GAMF…RLLI), and 2270 to 2290 (IIAV…GLLG). The ABC transporter 2 domain occupies 2254 to 2489 (VQLHRLTKTY…FGRGFTVKVH (236 aa)). ATP is bound at residue 2290–2297 (GVNGAGKT). Residues Asn-2318, Asn-2542, and Asn-2547 are each glycosylated (N-linked (GlcNAc...) asparagine). The span at 2575–2587 (VDTSSQGSTISVD) shows a compositional bias: polar residues. The segment at 2575 to 2595 (VDTSSQGSTISVDSQEDQLDS) is disordered.

This sequence belongs to the ABC transporter superfamily. ABCA family. Interacts with NR1H2 and ABCA1; this interaction is required for ABCA1 localization to the cell surface and is necessary for its normal activity and stability. In terms of tissue distribution, expressed in a number of other tissues besides skin, including heart, intestine, stomach, and kidney. Expressed mainly in the granular layer of the skin. Expressed in lung. Expressed in alpha and beta cells of pancreatic islets.

It is found in the cytoplasmic vesicle. It localises to the secretory vesicle membrane. Its subcellular location is the golgi apparatus membrane. The enzyme catalyses ATP + H2O + phospholipidSide 1 = ADP + phosphate + phospholipidSide 2.. It catalyses the reaction a beta-D-glucosylceramide(in) + ATP + H2O = a beta-D-glucosylceramide(out) + ADP + phosphate + H(+). Its function is as follows. Transports lipids such as glucosylceramides from the outer to the inner leaflet of lamellar granules (LGs) membrane, whereby the lipids are finally transported to the keratinocyte periphery via the trans-Golgi network and LGs and released to the apical surface of the granular keratinocytes to form lipid lamellae in the stratum corneum of the epidermis, which is essential for skin barrier function. In the meantime, participates in the transport of the lamellar granules-associated proteolytic enzymes, in turn regulates desquamation and keratinocyte differentiation. Furthermore, is essential for the regulation of cellular cholesterol homeostasis by regulating ABCA1-dependent cholesterol efflux from macrophages through interaction with NR1H2 and ABCA1. Plays pleiotropic roles in regulating glucose stimulated insulin secretion from beta cells, regulating the morphology and fusion of insulin granules, lipid raft abundance and the actin cytoskeleton. Also involved in lung surfactant biogenesis. The protein is Glucosylceramide transporter ABCA12 of Mus musculus (Mouse).